The following is a 266-amino-acid chain: Receptor-recognizing protein gp38 (266 aa).

10 short sequence motifs (GRM) span residues 116–123 (GRGGNGGY), 126–137 (SGGDGNGTQGGH), 157–171 (AGGG…RPHS), 174–184 (KWQDIGGGGGR), 187–191 (GGAGG), 194–200 (YSGGAAS), 202–209 (EGPGGGYD), 214–220 (HSGAGGN), 223–228 (AAGQNA), and 232–246 (GGKV…ASGH).

It belongs to the receptor-recognizing protein gp38 family.

It localises to the virion. Its function is as follows. Receptor binding protein (RBP) that is at the tip of the long tail fibers and serves as the phage recognition site for the attachment host receptor. Probably uses the host receptor OmpA. This is Receptor-recognizing protein gp38 (38) from Enterobacteria phage Ox2 (Bacteriophage Ox2).